Reading from the N-terminus, the 361-residue chain is Phospho-N-acetylmuramoyl-pentapeptide-transferase (361 aa).

10 consecutive transmembrane segments (helical) span residues 25–45 (TGGAMVTGALFVFMFGPWIID), 72–92 (TPTMGGLMILSGLTVGTVLWA), 95–115 (LNPYVWIVLAVTLGFGFVGFY), 135–155 (LLIEFIIAGAACFALVWLGRA), 169–189 (VMLNLGWAFVVFGAFVVVGAG), 200–220 (GLAIVPVMIAAASFGLISYLA), 240–260 (LAVLCGALLGAGLGFLWFNAP), 264–284 (IFMGDTGSLALGGMLGSIAVA), 289–309 (IVLAVIGGLFVLEAVSVIVQV), and 338–358 (QIVIRFWIIAVMLALAGLSTL).

It belongs to the glycosyltransferase 4 family. MraY subfamily. Mg(2+) is required as a cofactor.

Its subcellular location is the cell inner membrane. It catalyses the reaction UDP-N-acetyl-alpha-D-muramoyl-L-alanyl-gamma-D-glutamyl-meso-2,6-diaminopimeloyl-D-alanyl-D-alanine + di-trans,octa-cis-undecaprenyl phosphate = di-trans,octa-cis-undecaprenyl diphospho-N-acetyl-alpha-D-muramoyl-L-alanyl-D-glutamyl-meso-2,6-diaminopimeloyl-D-alanyl-D-alanine + UMP. Its pathway is cell wall biogenesis; peptidoglycan biosynthesis. Its function is as follows. Catalyzes the initial step of the lipid cycle reactions in the biosynthesis of the cell wall peptidoglycan: transfers peptidoglycan precursor phospho-MurNAc-pentapeptide from UDP-MurNAc-pentapeptide onto the lipid carrier undecaprenyl phosphate, yielding undecaprenyl-pyrophosphoryl-MurNAc-pentapeptide, known as lipid I. The polypeptide is Phospho-N-acetylmuramoyl-pentapeptide-transferase (Rhodopseudomonas palustris (strain TIE-1)).